The chain runs to 279 residues: Phosphate-binding protein PstS (279 aa).

The first 18 residues, 1–18 (MKKVIILIFMLSTSLLYN), serve as a signal peptide directing secretion. Residue Cys-19 is the site of N-palmitoyl cysteine attachment. A lipid anchor (S-diacylglycerol cysteine) is attached at Cys-19. Residues 33–35 (STT), Ser-63, and 151–153 (SGS) each bind phosphate.

It belongs to the PstS family. In terms of assembly, monomer (in vitro). The complex is composed of two ATP-binding proteins (PstB), two transmembrane proteins (PstC and PstA) and a solute-binding protein (PstS).

The protein localises to the cell membrane. Its function is as follows. Binds inorganic phosphate with a Kd of 1.2 uM. Part of the ABC transporter complex PstSACB involved in phosphate import. The polypeptide is Phosphate-binding protein PstS (Borreliella burgdorferi (strain ATCC 35210 / DSM 4680 / CIP 102532 / B31) (Borrelia burgdorferi)).